The chain runs to 435 residues: Protein SUPPRESSOR OF K(+) TRANSPORT GROWTH DEFECT 1 (435 aa).

The region spanning 7-72 (EQAIEYVKQA…LRRAEEIRAV (66 aa)) is the MIT domain. A disordered region spans residues 73-113 (LDEGGSGPGSNGDAAVATRPKTKPKDGEGGGKDGEDPEQSK). A compositionally biased stretch (basic and acidic residues) spans 95 to 113 (KPKDGEGGGKDGEDPEQSK). 172–179 (GPPGTGKS) contributes to the ATP binding site.

It belongs to the AAA ATPase family. As to quaternary structure, monomer or homodimer (in nucleotide-free form). Decamer, dodecamer or tetradecamer of two stacked respective homooligomeric rings (when bound to ATP); the dodecameric form seems to be predominant. Interacts with members of the ESCRT-III subcomplex such as LIP5, VPS60-1, VPS2.1, VPS20.1, VPS20.2, VPS24-1, VPS32.1, VPS32.2, CHMP1A and VPS24. Binds to PROS/At4g24370. In terms of tissue distribution, mostly expressed in leaves, to a lower extent in seeds, and barely in roots and flowers (at protein level). Particularly expressed in trichomes.

It is found in the cytoplasm. Its subcellular location is the nucleus. It localises to the endosome. The protein resides in the multivesicular body membrane. The protein localises to the prevacuolar compartment membrane. It carries out the reaction ATP + H2O = ADP + phosphate + H(+). Activated by LIP5 and PROS. Its function is as follows. Involved in the transport of biosynthetic membrane proteins from the prevacuolar/endosomal compartment to the vacuole. Required for multivesicular body (MVB) protein sorting. Catalyzes the ATP-dependent dissociation of class E VPS proteins from endosomal membranes, such as the disassembly of the ESCRT-III complex. May also regulate cell cycle. Required during seed development for the formation of mucilage in seed coat and testa. Involved in the maintenance of Na(+)/K(+) homeostasis under salt stress. Required for cell expansion. This Arabidopsis thaliana (Mouse-ear cress) protein is Protein SUPPRESSOR OF K(+) TRANSPORT GROWTH DEFECT 1.